The sequence spans 138 residues: ATP synthase epsilon chain (138 aa).

It belongs to the ATPase epsilon chain family. As to quaternary structure, F-type ATPases have 2 components, CF(1) - the catalytic core - and CF(0) - the membrane proton channel. CF(1) has five subunits: alpha(3), beta(3), gamma(1), delta(1), epsilon(1). CF(0) has three main subunits: a, b and c.

The protein localises to the cell inner membrane. Produces ATP from ADP in the presence of a proton gradient across the membrane. The polypeptide is ATP synthase epsilon chain (Citrifermentans bemidjiense (strain ATCC BAA-1014 / DSM 16622 / JCM 12645 / Bem) (Geobacter bemidjiensis)).